We begin with the raw amino-acid sequence, 474 residues long: 15-cis-phytoene desaturase (474 aa).

It belongs to the carotenoid/retinoid oxidoreductase family.

Its subcellular location is the cell membrane. The enzyme catalyses 2 a plastoquinone + 15-cis-phytoene = 9,9',15-tri-cis-zeta-carotene + 2 a plastoquinol. Its pathway is carotenoid biosynthesis; lycopene biosynthesis. Its activity is regulated as follows. Inhibited by the herbicide norflurazon in a non-competitive way. Functionally, this enzyme converts phytoene into zeta-carotene via the intermediary of phytofluene by the symmetrical introduction of two double bonds at the C-11 and C-11' positions of phytoene. Also active with phytofluene and 1,2-epoxyphytoene as substrates. The polypeptide is 15-cis-phytoene desaturase (pds) (Synechococcus elongatus (strain ATCC 33912 / PCC 7942 / FACHB-805) (Anacystis nidulans R2)).